Reading from the N-terminus, the 94-residue chain is uncharacterized protein (94 aa).

This is an uncharacterized protein from Helicobacter pylori (strain ATCC 700392 / 26695) (Campylobacter pylori).